We begin with the raw amino-acid sequence, 174 residues long: Large ribosomal subunit protein bL12cz (174 aa).

A chloroplast-targeting transit peptide spans 1–45 (MASTTFSSAFSILSLPSSSPSPPPSPPRTLPVANRRRRAAAVAST). The disordered stretch occupies residues 1–46 (MASTTFSSAFSILSLPSSSPSPPPSPPRTLPVANRRRRAAAVASTA). Positions 7–18 (SSAFSILSLPSS) are enriched in low complexity. Residues 19–29 (SPSPPPSPPRT) show a composition bias toward pro residues.

It belongs to the bacterial ribosomal protein bL12 family.

It localises to the plastid. The protein resides in the chloroplast. In Secale cereale (Rye), this protein is Large ribosomal subunit protein bL12cz (RPL12-1).